A 747-amino-acid polypeptide reads, in one-letter code: MQKSITSFFKKKSDATDSPSPPKKVPKIDAKTELPDEPHIKSESASPETKPKVEPMSVDSEEKTSPVKNVKKEPKEVDDKTTDKKVTTIGLNSTAATKEDVENYDPSADSYHPLKNAYWKDKKVTPYLALARTFQVIEETKGRLKMIDTLSNFFCSVMLVSPEDLVPSVYLSINQLAPAYEGLELGVAETTLMKAICKATGRNLAHIKSQTQLTGDLGIVAEQSRVSQRMMFQPAPLNVRDVFRKLREIAKLSGQSKMDLVYNMFVACRSSEARFFIRSLIGKLRIGIAEQSLLTALAIGLVKKNHIDDCKASKVPDVYKDEIVDTTLLLKTAYCQCPNYDIIIPAILKYDIKELQERCPMHPGMPLRPMLAQPTKGVHEVFERFGGMQITCEWKYDGERAQIHRNEKGEISIFSRNSENNTAKYPDLIARSTALLKGDVKSYIIDSEIVAWDVERKQILPFQVLSTRKRKNVDIEEIKVQVCVYIFDLLYINGTALVTKNLSERRKLLLEHFQEVEGEWKFATALDTNDIDEVQQFLEESIKGNCEGLMVKTLDEEATYEIAKRSRNWLKLKKDYLSNVGDSLDLVVIGGYKGKGRRTGTYGGFLLACYDTENEEYQSICKIGTGFTDEDLQTHSEFLGKHVTSAAKSYYRYDPSLEPDHWFEPVQVWEVKCADLSLSPIHRAAIGIVDGERGISLRFPRFIRIRDDKNSENATDANQVAHMYQSQDQVKNNQKSSTQMEMEDEFY.

The tract at residues 1–84 (MQKSITSFFK…KEVDDKTTDK (84 aa)) is disordered. Residues Ser18, Ser20, Ser42, Ser44, Ser46, Ser60, and Ser65 each carry the phosphoserine modification. Over residues 26-42 (PKIDAKTELPDEPHIKS) the composition is skewed to basic and acidic residues. Over residues 60 to 84 (SEEKTSPVKNVKKEPKEVDDKTTDK) the composition is skewed to basic and acidic residues. Lys395 (N6-AMP-lysine intermediate) is an active-site residue. Over residues 725-740 (QSQDQVKNNQKSSTQM) the composition is skewed to polar residues. Residues 725–747 (QSQDQVKNNQKSSTQMEMEDEFY) are disordered.

The protein belongs to the ATP-dependent DNA ligase family.

The protein localises to the nucleus. It catalyses the reaction ATP + (deoxyribonucleotide)n-3'-hydroxyl + 5'-phospho-(deoxyribonucleotide)m = (deoxyribonucleotide)n+m + AMP + diphosphate.. Functionally, DNA ligase that seals nicks in double-stranded DNA during DNA replication, DNA recombination and DNA repair. This is DNA ligase 1 from Drosophila melanogaster (Fruit fly).